Here is a 280-residue protein sequence, read N- to C-terminus: Energy-coupling factor transporter ATP-binding protein EcfA2 (280 aa).

An ABC transporter domain is found at Ile-3–Gly-245. Gly-40–Ser-47 is a binding site for ATP.

This sequence belongs to the ABC transporter superfamily. Energy-coupling factor EcfA family. In terms of assembly, forms a stable energy-coupling factor (ECF) transporter complex composed of 2 membrane-embedded substrate-binding proteins (S component), 2 ATP-binding proteins (A component) and 2 transmembrane proteins (T component).

The protein localises to the cell membrane. In terms of biological role, ATP-binding (A) component of a common energy-coupling factor (ECF) ABC-transporter complex. Unlike classic ABC transporters this ECF transporter provides the energy necessary to transport a number of different substrates. This is Energy-coupling factor transporter ATP-binding protein EcfA2 from Streptococcus thermophilus (strain CNRZ 1066).